The primary structure comprises 420 residues: Caspase-12 (420 aa).

A CARD domain is found at 1–92 (MAAKRTHERD…QLSLQFPSDD (92 aa)). 2 positions are modified to phosphoserine: serine 85 and serine 90. Residues 93-115 (EEDELQKMFTPSSASESRGKVED) are disordered. Residues histidine 251 and cysteine 299 contribute to the active site.

This sequence belongs to the peptidase C14A family. Heterotetramer that consists of two anti-parallel arranged heterodimers, each one formed by two subunits (Potential). May interact with TRAF2.

In terms of biological role, involved in the activation cascade of caspases responsible for apoptosis execution. The polypeptide is Caspase-12 (Casp12) (Rattus norvegicus (Rat)).